A 184-amino-acid chain; its full sequence is ATP synthase subunit delta (184 aa).

Belongs to the ATPase delta chain family. As to quaternary structure, F-type ATPases have 2 components, F(1) - the catalytic core - and F(0) - the membrane proton channel. F(1) has five subunits: alpha(3), beta(3), gamma(1), delta(1), epsilon(1). F(0) has three main subunits: a(1), b(2) and c(10-14). The alpha and beta chains form an alternating ring which encloses part of the gamma chain. F(1) is attached to F(0) by a central stalk formed by the gamma and epsilon chains, while a peripheral stalk is formed by the delta and b chains.

It localises to the cell inner membrane. Its function is as follows. F(1)F(0) ATP synthase produces ATP from ADP in the presence of a proton or sodium gradient. F-type ATPases consist of two structural domains, F(1) containing the extramembraneous catalytic core and F(0) containing the membrane proton channel, linked together by a central stalk and a peripheral stalk. During catalysis, ATP synthesis in the catalytic domain of F(1) is coupled via a rotary mechanism of the central stalk subunits to proton translocation. Functionally, this protein is part of the stalk that links CF(0) to CF(1). It either transmits conformational changes from CF(0) to CF(1) or is implicated in proton conduction. The chain is ATP synthase subunit delta from Caulobacter sp. (strain K31).